A 249-amino-acid polypeptide reads, in one-letter code: Low affinity immunoglobulin gamma Fc region receptor III-A (249 aa).

Positions 1–16 (MWQLLPSTALLLVASA) are cleaved as a signal peptide. The Extracellular segment spans residues 17–198 (RPQAADLPKA…IQGPPVPSTS (182 aa)). 2 Ig-like C2-type domains span residues 24–104 (PKAV…LEVH) and 119–172 (EGEP…YFCR). 2 disulfides stabilise this stretch: cysteine 47–cysteine 88 and cysteine 127–cysteine 171. N-linked (GlcNAc...) asparagine glycosylation is found at asparagine 55, asparagine 63, asparagine 166, and asparagine 179. The helical transmembrane segment at 199-219 (ALLPFWPHIPFAVVMALLFAV) threads the bilayer. The Cytoplasmic portion of the chain corresponds to 220–249 (DTGLYFAMQRHLHNSKRAWENSKVSWKQDP).

In terms of assembly, forms a heterooligomeric complex with ITAM-containing signaling subunits FCER1G. Interacts (via transmembrane domain) with signaling subunits; this interaction is a prerequisite for receptor complex expression on the cell surface and intracellular signal transduction. Binds the Fc region of antigen-complexed IgG.

The protein resides in the cell membrane. Receptor for the invariable Fc fragment of immunoglobulin gamma (IgG). Optimally activated upon binding of clustered antigen-IgG complexes displayed on cell surfaces, triggers lysis of antibody-coated cells, a process known as antibody-dependent cellular cytotoxicity (ADCC). Does not bind free monomeric IgG, thus avoiding inappropriate effector cell activation in the absence of antigenic trigger. Mediates IgG effector functions on natural killer (NK) cells. Binds antigen-IgG complexes generated upon infection and triggers NK cell-dependent cytokine production and degranulation to limit viral load and propagation. Fc-binding subunit that associates with FCER1G adapter to form functional signaling complexes. Following the engagement of antigen-IgG complexes, triggers phosphorylation of immunoreceptor tyrosine-based activation motif (ITAM)-containing adapter with subsequent activation of phosphatidylinositol 3-kinase signaling and sustained elevation of intracellular calcium that ultimately drive NK cell activation. Mediates enhanced ADCC in response to afucosylated IgGs. The protein is Low affinity immunoglobulin gamma Fc region receptor III-A of Mustela putorius furo (European domestic ferret).